The following is a 368-amino-acid chain: MAKRDYYEVLGLDKSASAQDIKRAYRKLARQYHPDINQEADAADKFKEIGEAYEVLSDEQKRAQYDRFGFEGANQFGGGGDFQGGFGDIFDMFFGGGGRRQDPNAPRRGEDYQYVVDLDFMESVTGKTETIELEIEVECDTCMGSGAKPGTKPETCNRCGGSGVETVEQNTILGRMVNQRPCSQCHGSGKTIKEKCPTCHGSGHVKKKQTVEVKIPAGIDNGQQIRLSGKGGPGVNGGPAGDLYVVVRVRAHEIFERVDQHIAMDMPITFAQAALGAEIEVPTVHGNVSLKVPAGTQTGSKFRLRGKGMPSVRGGANGDQYVSVIVMTPKNMTDRQKELLREFEEISGESGVEEEHGMFQKMKKFFSH.

The region spanning 5 to 69 is the J domain; it reads DYYEVLGLDK…QKRAQYDRFG (65 aa). A CR-type zinc finger spans residues 126–208; the sequence is GKTETIELEI…CHGSGHVKKK (83 aa). Positions 139, 142, 156, 159, 182, 185, 196, and 199 each coordinate Zn(2+). CXXCXGXG motif repeat units follow at residues 139–146, 156–163, 182–189, and 196–203; these read CDTCMGSG, CNRCGGSG, CSQCHGSG, and CPTCHGSG.

It belongs to the DnaJ family. Homodimer. Zn(2+) is required as a cofactor.

It localises to the cytoplasm. Its function is as follows. Participates actively in the response to hyperosmotic and heat shock by preventing the aggregation of stress-denatured proteins and by disaggregating proteins, also in an autonomous, DnaK-independent fashion. Unfolded proteins bind initially to DnaJ; upon interaction with the DnaJ-bound protein, DnaK hydrolyzes its bound ATP, resulting in the formation of a stable complex. GrpE releases ADP from DnaK; ATP binding to DnaK triggers the release of the substrate protein, thus completing the reaction cycle. Several rounds of ATP-dependent interactions between DnaJ, DnaK and GrpE are required for fully efficient folding. Also involved, together with DnaK and GrpE, in the DNA replication of plasmids through activation of initiation proteins. The sequence is that of Chaperone protein DnaJ from Exiguobacterium sp. (strain ATCC BAA-1283 / AT1b).